A 316-amino-acid chain; its full sequence is 4-hydroxy-3-methylbut-2-enyl diphosphate reductase (316 aa).

A [4Fe-4S] cluster-binding site is contributed by C12. (2E)-4-hydroxy-3-methylbut-2-enyl diphosphate-binding residues include H43 and H81. Dimethylallyl diphosphate contacts are provided by H43 and H81. Isopentenyl diphosphate is bound by residues H43 and H81. Residue C103 participates in [4Fe-4S] cluster binding. Residue H131 participates in (2E)-4-hydroxy-3-methylbut-2-enyl diphosphate binding. H131 contributes to the dimethylallyl diphosphate binding site. H131 contacts isopentenyl diphosphate. E133 (proton donor) is an active-site residue. Residue T170 coordinates (2E)-4-hydroxy-3-methylbut-2-enyl diphosphate. Position 198 (C198) interacts with [4Fe-4S] cluster. The (2E)-4-hydroxy-3-methylbut-2-enyl diphosphate site is built by S226, N228, and S271. The dimethylallyl diphosphate site is built by S226, N228, and S271. The isopentenyl diphosphate site is built by S226, N228, and S271.

Belongs to the IspH family. Requires [4Fe-4S] cluster as cofactor.

The catalysed reaction is isopentenyl diphosphate + 2 oxidized [2Fe-2S]-[ferredoxin] + H2O = (2E)-4-hydroxy-3-methylbut-2-enyl diphosphate + 2 reduced [2Fe-2S]-[ferredoxin] + 2 H(+). The enzyme catalyses dimethylallyl diphosphate + 2 oxidized [2Fe-2S]-[ferredoxin] + H2O = (2E)-4-hydroxy-3-methylbut-2-enyl diphosphate + 2 reduced [2Fe-2S]-[ferredoxin] + 2 H(+). The protein operates within isoprenoid biosynthesis; dimethylallyl diphosphate biosynthesis; dimethylallyl diphosphate from (2E)-4-hydroxy-3-methylbutenyl diphosphate: step 1/1. Its pathway is isoprenoid biosynthesis; isopentenyl diphosphate biosynthesis via DXP pathway; isopentenyl diphosphate from 1-deoxy-D-xylulose 5-phosphate: step 6/6. Functionally, catalyzes the conversion of 1-hydroxy-2-methyl-2-(E)-butenyl 4-diphosphate (HMBPP) into a mixture of isopentenyl diphosphate (IPP) and dimethylallyl diphosphate (DMAPP). Acts in the terminal step of the DOXP/MEP pathway for isoprenoid precursor biosynthesis. The protein is 4-hydroxy-3-methylbut-2-enyl diphosphate reductase of Bacillus cereus (strain AH820).